Here is a 378-residue protein sequence, read N- to C-terminus: Alkanesulfonate monooxygenase (378 aa).

This sequence belongs to the SsuD family.

It carries out the reaction an alkanesulfonate + FMNH2 + O2 = an aldehyde + FMN + sulfite + H2O + 2 H(+). Its function is as follows. Catalyzes the desulfonation of aliphatic sulfonates. The sequence is that of Alkanesulfonate monooxygenase from Bacillus velezensis (strain DSM 23117 / BGSC 10A6 / LMG 26770 / FZB42) (Bacillus amyloliquefaciens subsp. plantarum).